Reading from the N-terminus, the 341-residue chain is MSSQLENEASFEATTLGFLWRQFTRPKPLPTGITLAGQVAIVTGSNVGLGFSASRQLLQLGLSHLIMGVRSQAKGDVAAAQLRTDFPFATISVWIVDMESYDSVCAFASRCESLDRIDIVILNAGLIKTPYTVVRATGNEVTLQVNYLSTALLTILLLPILKAKKRVDCSWSPVISIVGSDLMYENEVELEGPVLPQFQQEETFSQFSWYGKSKLLQTMFISKIAEFVNPHDVLVNVSNPGMTGGTDFFRGYPALMMKLIAVGQWILARPVDMAATTYLDAVLVQGEKSHGSFTSDWTIKPYPKIWYTPEGQQLRERLWEETMEELNFVGASKIVNDLKRS.

NADP(+) contacts are provided by Leu49, Lys74, Asp97, Asn123, Tyr210, and Lys214. Tyr210 acts as the Proton donor in catalysis. The active-site Lowers pKa of active site Tyr is the Lys214.

The protein belongs to the short-chain dehydrogenases/reductases (SDR) family.

Its pathway is secondary metabolite biosynthesis. Short chain dehydrogenase; part of the gene cluster that mediates the biosynthesis of virensols and trichoxide, fungal natural products that contain or are derived from a salicylaldehyde core. The pathway begins with the synthesis of the reduced chain in virensol C by the highly reducing polyketide synthase virA via condensation of one acetate and 8 malonate units. VirA has interesting programming rules since the first 2 ketides are fully reduced, the 3 following ketides undergo beta-dehydration, and the last 3 ketides are only reduced to beta-hydroxys to yield the trihydroxy portion. The production of aldehyde virensol C by virA alone is surprising, since virA does not contain a reductase (R) domain that is typically associated with reductive product release in HRPKS. The cupin-domain enzyme virC is involved in enhancing virA product turnover. The short-chain dehydrogenase virB then oxidizes the C-7 alcohol of virensol C to a ketone, yielding virensol D. Virensol D is further transformed to salicylaldehyde 5-deoxyaurocitrin by the short-chain dehydrogenase virD. VirD catalyzes the dehydrogenation of C-3 to form the beta-ketone aldehyde, which is followed by the generation of the nucleophilic C-2 that is required for the intramolecular aldol condensation between C-2 and C-7, itself followed by dehydration and aromatization which leads to salicylaldehyde 5-deoxyaurocitrin. While the dehydrogenation of virensol D is definitely catalyzed by virD, the aldol condensation and dehydration may be uncatalyzed or assisted by virD. The short chain dehydrogenase virG then converts salicylaldehyde 5-deoxyaurocitrin into virensol B which is further hydroxylated by the cytochrome P450 monooxygenase virE to yield the hydroquinone virensol A. VirI then may oxidize virensol A to form the quinone, while virH performs the epoxidation. Finally, the two remaining short-chain dehydrogenases, virK and virL, are probably responsible for reducing the ketones to the corresponding alcohols to furnish the epoxycyclohexanol structure in trichoxide. This Hypocrea virens (strain Gv29-8 / FGSC 10586) (Gliocladium virens) protein is Short chain dehydrogenase virL.